We begin with the raw amino-acid sequence, 76 residues long: uncharacterized protein (76 aa).

This is an uncharacterized protein from African swine fever virus (isolate Tick/Malawi/Lil 20-1/1983) (ASFV).